The primary structure comprises 172 residues: Endoribonuclease YbeY (172 aa).

3 residues coordinate Zn(2+): histidine 136, histidine 140, and histidine 146.

Belongs to the endoribonuclease YbeY family. The cofactor is Zn(2+).

It is found in the cytoplasm. In terms of biological role, single strand-specific metallo-endoribonuclease involved in late-stage 70S ribosome quality control and in maturation of the 3' terminus of the 16S rRNA. The chain is Endoribonuclease YbeY from Rickettsia canadensis (strain McKiel).